The sequence spans 112 residues: Cytochrome c3 (112 aa).

Heme c is bound by residues H26, H29, C34, C37, H38, H39, C49, C54, H55, H73, C83, C86, H87, C104, C109, and H110.

Requires heme as cofactor.

Its function is as follows. Participates in sulfate respiration coupled with phosphorylation by transferring electrons from the enzyme dehydrogenase to ferredoxin. The chain is Cytochrome c3 from Megalodesulfovibrio gigas (strain ATCC 19364 / DSM 1382 / NCIMB 9332 / VKM B-1759) (Desulfovibrio gigas).